Reading from the N-terminus, the 207-residue chain is LexA repressor (207 aa).

Residues 28-48 (VREIGEAVGLASSSTVHGHLS) constitute a DNA-binding region (H-T-H motif). Residues S130 and K168 each act as for autocatalytic cleavage activity in the active site.

Belongs to the peptidase S24 family. Homodimer.

The catalysed reaction is Hydrolysis of Ala-|-Gly bond in repressor LexA.. Represses a number of genes involved in the response to DNA damage (SOS response), including recA and lexA. In the presence of single-stranded DNA, RecA interacts with LexA causing an autocatalytic cleavage which disrupts the DNA-binding part of LexA, leading to derepression of the SOS regulon and eventually DNA repair. The chain is LexA repressor from Staphylococcus aureus (strain Mu3 / ATCC 700698).